The primary structure comprises 502 residues: Neuronal acetylcholine receptor subunit alpha-7 (502 aa).

An N-terminal signal peptide occupies residues 1–23 (MGLRALMLWLLAAAGLVRESLQG). Residues 24–233 (EFQRKLYKEL…VTMRRRTLYY (210 aa)) are Extracellular-facing. 2 residues coordinate Ca(2+): Arg42 and Val44. Asn46, Asn90, and Asn133 each carry an N-linked (GlcNAc...) asparagine glycan. The cysteines at positions 150 and 164 are disulfide-linked. Ca(2+) is bound by residues Thr172 and Tyr210. A disulfide bond links Cys212 and Cys213. Helical transmembrane passes span 234–254 (GLNLLIPCVLISALALLVFLL), 262–282 (ISLGITVLLSLTVFMLLVAEI), and 295–315 (QYFASTMIIVGLSVVVTVIVL). Residues 316–469 (QYHHHDPDGG…WKFAASVVDR (154 aa)) lie on the Cytoplasmic side of the membrane. A helical membrane pass occupies residues 470–490 (LCLMAFSVFTIICTIGILMSA).

This sequence belongs to the ligand-gated ion channel (TC 1.A.9) family. Acetylcholine receptor (TC 1.A.9.1) subfamily. Alpha-7/CHRNA7 sub-subfamily. Homopentamer. Can also form heteropentamers with CHRNB2, mainly found in basal forebrain cholinergic neurons.

It is found in the postsynaptic cell membrane. It localises to the cell membrane. It catalyses the reaction Ca(2+)(in) = Ca(2+)(out). The enzyme catalyses K(+)(in) = K(+)(out). It carries out the reaction Na(+)(in) = Na(+)(out). The catalysed reaction is choline(out) = choline(in). It catalyses the reaction NH4(+)(in) = NH4(+)(out). The enzyme catalyses L-arginine(in) = L-arginine(out). It carries out the reaction guanidine(out) = guanidine(in). Its activity is regulated as follows. Activated by a myriad of ligands such as acetylcholine, cytisine, nicotine, choline and epibatidine. Activity is modulated by positive allosteric modulators (PAMs), such as flavonoids, with a wide range of chemical diversity, pharmacological sensitivity and efficacy. AChR activity is inhibited by the antagonists alpha-conotoxons RgIA, ImI and ImII, small disulfide-constrained peptides from cone snails. Its function is as follows. Component of neuronal acetylcholine receptors (nAChRs) that function as pentameric, ligand-gated cation channels with high calcium permeability among other activities. nAChRs are excitatory neurotrasnmitter receptors formed by a collection of nAChR subunits known to mediate synaptic transmission in the nervous system and the neuromuscular junction. Each nAchR subunit confers differential attributes to channel properties, including activation, deactivation and desensitization kinetics, pH sensitivity, cation permeability, and binding to allosteric modulators. CHRNA7 is an homooligomeric neuronal acetylcholine receptor abundantly expressed in the central nervous system. Characterized by a fast desensitization and high calcium permeability. Also expressed in non-neuronal cells such as immune cells like lymphocytes, monocytes and macrophages. The sequence is that of Neuronal acetylcholine receptor subunit alpha-7 (CHRNA7) from Gallus gallus (Chicken).